The sequence spans 127 residues: Aspartate 1-decarboxylase (127 aa).

The active-site Schiff-base intermediate with substrate; via pyruvic acid is the Ser-25. Pyruvic acid (Ser) is present on Ser-25. Thr-57 serves as a coordination point for substrate. The active-site Proton donor is the Tyr-58. Gly-73–Ala-75 contributes to the substrate binding site.

Belongs to the PanD family. As to quaternary structure, heterooctamer of four alpha and four beta subunits. The cofactor is pyruvate. Is synthesized initially as an inactive proenzyme, which is activated by self-cleavage at a specific serine bond to produce a beta-subunit with a hydroxyl group at its C-terminus and an alpha-subunit with a pyruvoyl group at its N-terminus.

Its subcellular location is the cytoplasm. It carries out the reaction L-aspartate + H(+) = beta-alanine + CO2. It participates in cofactor biosynthesis; (R)-pantothenate biosynthesis; beta-alanine from L-aspartate: step 1/1. In terms of biological role, catalyzes the pyruvoyl-dependent decarboxylation of aspartate to produce beta-alanine. This chain is Aspartate 1-decarboxylase, found in Clostridium botulinum (strain Loch Maree / Type A3).